We begin with the raw amino-acid sequence, 70 residues long: Turripeptide Ici9.2 (70 aa).

A signal peptide spans 1–20 (MKVYCLLLVLLVGLVSQAQG). In terms of domain architecture, Kazal-like spans 21–70 (QLDKKCQTMCTMEYLPVCGSDGTTYPNKCTLTSTACVNQMDITVLHNGEC). Intrachain disulfides connect Cys26-Cys56, Cys30-Cys49, and Cys38-Cys70.

This sequence belongs to the conopeptide P-like superfamily. Expressed by the venom duct.

It localises to the secreted. Functionally, acts as a neurotoxin by inhibiting an ion channel. May also act as a serine protease inhibitor, since it possess the kazal serine protease inhibitor signature. The protein is Turripeptide Ici9.2 of Iotyrris cingulifera (Sea snail).